The following is a 69-amino-acid chain: Large ribosomal subunit protein uL29 (69 aa).

The protein belongs to the universal ribosomal protein uL29 family.

This chain is Large ribosomal subunit protein uL29, found in Clostridium perfringens (strain ATCC 13124 / DSM 756 / JCM 1290 / NCIMB 6125 / NCTC 8237 / Type A).